The following is a 435-amino-acid chain: Tol-Pal system protein TolB (435 aa).

An N-terminal signal peptide occupies residues 1–20 (MRKIIAGVFIFVFLISNLYA).

This sequence belongs to the TolB family. The Tol-Pal system is composed of five core proteins: the inner membrane proteins TolA, TolQ and TolR, the periplasmic protein TolB and the outer membrane protein Pal. They form a network linking the inner and outer membranes and the peptidoglycan layer.

It is found in the periplasm. In terms of biological role, part of the Tol-Pal system, which plays a role in outer membrane invagination during cell division and is important for maintaining outer membrane integrity. The sequence is that of Tol-Pal system protein TolB from Francisella tularensis subsp. mediasiatica (strain FSC147).